Reading from the N-terminus, the 414-residue chain is Glutamyl-tRNA reductase (414 aa).

Substrate-binding positions include 48–51 (TCNR), S104, 109–111 (EAQ), and Q115. C49 serves as the catalytic Nucleophile. 184-189 (GAGEMI) lines the NADP(+) pocket.

Belongs to the glutamyl-tRNA reductase family. As to quaternary structure, homodimer.

It carries out the reaction (S)-4-amino-5-oxopentanoate + tRNA(Glu) + NADP(+) = L-glutamyl-tRNA(Glu) + NADPH + H(+). The protein operates within porphyrin-containing compound metabolism; protoporphyrin-IX biosynthesis; 5-aminolevulinate from L-glutamyl-tRNA(Glu): step 1/2. Catalyzes the NADPH-dependent reduction of glutamyl-tRNA(Glu) to glutamate 1-semialdehyde (GSA). This chain is Glutamyl-tRNA reductase, found in Methylobacillus flagellatus (strain ATCC 51484 / DSM 6875 / VKM B-1610 / KT).